Reading from the N-terminus, the 122-residue chain is Large ribosomal subunit protein uL14 (122 aa).

It belongs to the universal ribosomal protein uL14 family. In terms of assembly, part of the 50S ribosomal subunit. Forms a cluster with proteins L3 and L19. In the 70S ribosome, L14 and L19 interact and together make contacts with the 16S rRNA in bridges B5 and B8.

In terms of biological role, binds to 23S rRNA. Forms part of two intersubunit bridges in the 70S ribosome. The protein is Large ribosomal subunit protein uL14 of Gluconobacter oxydans (strain 621H) (Gluconobacter suboxydans).